We begin with the raw amino-acid sequence, 58 residues long: Small integral membrane protein 11 (58 aa).

The chain crosses the membrane as a helical span at residues 10 to 32 (PLLLYILAAKTLILCLTFAGVKM). Positions 29-58 (GVKMYQRKRLEAKQQKLEAERKKQSEKKDN) form a coiled coil.

Expressed in heart, spleen, liver, stomach, muscle, lung, testis, skin, PBL and bone marrow.

It localises to the membrane. This Homo sapiens (Human) protein is Small integral membrane protein 11.